The chain runs to 235 residues: tRNA (cytidine-2'-O-)-methyltransferase TrmJ (235 aa).

S-adenosyl-L-methionine is bound by residues 77–79 (TSS), glycine 111, isoleucine 131, and 138–140 (PVL).

It belongs to the class IV-like SAM-binding methyltransferase superfamily. RNA methyltransferase TrmH family. As to quaternary structure, homodimer.

Its subcellular location is the cytoplasm. The catalysed reaction is cytidine(32) in tRNA + S-adenosyl-L-methionine = 2'-O-methylcytidine(32) in tRNA + S-adenosyl-L-homocysteine + H(+). Catalyzes the formation of 2'O-methylated cytidine (Cm32) at position 32 in tRNA. Is specific for cytidine. The sequence is that of tRNA (cytidine-2'-O-)-methyltransferase TrmJ from Sulfolobus acidocaldarius (strain ATCC 33909 / DSM 639 / JCM 8929 / NBRC 15157 / NCIMB 11770).